Reading from the N-terminus, the 340-residue chain is Solute carrier family 35 member G3 (340 aa).

The segment at 11–31 (PDFTQPSPPSTPSSLTSNHHN) is disordered. The next 9 helical transmembrane spans lie at 39 to 59 (TKGL…VGPF), 69 to 89 (LPSL…ALIL), 107 to 127 (FLHA…VQVV), 160 to 180 (AWCG…PGLG), 189 to 209 (LYTA…SLGL), 223 to 243 (TVAF…LFVL), 257 to 277 (CMVA…YAVT), 283 to 303 (LVCA…YYVL), and 307 to 327 (VAPS…IITA). One can recognise an EamA 1 domain in the interval 51 to 176 (LSAGFVGPFS…STLGLIIIVG (126 aa)). One can recognise an EamA 2 domain in the interval 223 to 327 (TVAFLFGLVG…VLGSIAIITA (105 aa)).

Belongs to the SLC35G solute transporter family.

It is found in the membrane. The sequence is that of Solute carrier family 35 member G3 (Slc35g3) from Rattus norvegicus (Rat).